Consider the following 594-residue polypeptide: Arginine--tRNA ligase (594 aa).

The 'HIGH' region signature appears at 139 to 149; that stretch reads ANPTGPLHVGH.

This sequence belongs to the class-I aminoacyl-tRNA synthetase family. Monomer.

The protein resides in the cytoplasm. The catalysed reaction is tRNA(Arg) + L-arginine + ATP = L-arginyl-tRNA(Arg) + AMP + diphosphate. In Burkholderia mallei (strain NCTC 10247), this protein is Arginine--tRNA ligase.